Here is a 507-residue protein sequence, read N- to C-terminus: Histidine ammonia-lyase (507 aa).

Residues 143-145 constitute a cross-link (5-imidazolinone (Ala-Gly)); it reads ASG. Ser144 is subject to 2,3-didehydroalanine (Ser).

Belongs to the PAL/histidase family. In terms of processing, contains an active site 4-methylidene-imidazol-5-one (MIO), which is formed autocatalytically by cyclization and dehydration of residues Ala-Ser-Gly.

It is found in the cytoplasm. It catalyses the reaction L-histidine = trans-urocanate + NH4(+). The protein operates within amino-acid degradation; L-histidine degradation into L-glutamate; N-formimidoyl-L-glutamate from L-histidine: step 1/3. The polypeptide is Histidine ammonia-lyase (Alkaliphilus oremlandii (strain OhILAs) (Clostridium oremlandii (strain OhILAs))).